The sequence spans 487 residues: ATP synthase subunit beta (487 aa).

171–178 (GGAGVGKT) is a binding site for ATP.

Belongs to the ATPase alpha/beta chains family. As to quaternary structure, F-type ATPases have 2 components, CF(1) - the catalytic core - and CF(0) - the membrane proton channel. CF(1) has five subunits: alpha(3), beta(3), gamma(1), delta(1), epsilon(1). CF(0) has three main subunits: a(1), b(2) and c(9-12). The alpha and beta chains form an alternating ring which encloses part of the gamma chain. CF(1) is attached to CF(0) by a central stalk formed by the gamma and epsilon chains, while a peripheral stalk is formed by the delta and b chains.

Its subcellular location is the cell membrane. The enzyme catalyses ATP + H2O + 4 H(+)(in) = ADP + phosphate + 5 H(+)(out). In terms of biological role, produces ATP from ADP in the presence of a proton gradient across the membrane. The catalytic sites are hosted primarily by the beta subunits. The protein is ATP synthase subunit beta of Leifsonia xyli subsp. xyli (strain CTCB07).